Consider the following 68-residue polypeptide: Putative membrane protein insertion efficiency factor (68 aa).

It belongs to the UPF0161 family.

Its subcellular location is the cell inner membrane. Functionally, could be involved in insertion of integral membrane proteins into the membrane. This chain is Putative membrane protein insertion efficiency factor, found in Persephonella marina (strain DSM 14350 / EX-H1).